A 227-amino-acid polypeptide reads, in one-letter code: Cytochrome c oxidase subunit 2 (227 aa).

Residues 1–14 (MAYPLQMGLQDATS) lie on the Mitochondrial intermembrane side of the membrane. A helical transmembrane segment spans residues 15–45 (PIMEELLHFHDHTLMIVFLISSLVLYIISLM). The Mitochondrial matrix segment spans residues 46-59 (LTTKLTHTSTMDAQ). A helical transmembrane segment spans residues 60 to 87 (EVETVWTILPAIILILIALPSLRILYMM). The Mitochondrial intermembrane portion of the chain corresponds to 88–227 (DEINNPSLTV…HFEKWSTSML (140 aa)). Residues His161, Cys196, Glu198, Cys200, His204, and Met207 each coordinate Cu cation. Glu198 contributes to the Mg(2+) binding site.

The protein belongs to the cytochrome c oxidase subunit 2 family. In terms of assembly, component of the cytochrome c oxidase (complex IV, CIV), a multisubunit enzyme composed of 14 subunits. The complex is composed of a catalytic core of 3 subunits MT-CO1, MT-CO2 and MT-CO3, encoded in the mitochondrial DNA, and 11 supernumerary subunits COX4I, COX5A, COX5B, COX6A, COX6B, COX6C, COX7A, COX7B, COX7C, COX8 and NDUFA4, which are encoded in the nuclear genome. The complex exists as a monomer or a dimer and forms supercomplexes (SCs) in the inner mitochondrial membrane with NADH-ubiquinone oxidoreductase (complex I, CI) and ubiquinol-cytochrome c oxidoreductase (cytochrome b-c1 complex, complex III, CIII), resulting in different assemblies (supercomplex SCI(1)III(2)IV(1) and megacomplex MCI(2)III(2)IV(2)). Found in a complex with TMEM177, COA6, COX18, COX20, SCO1 and SCO2. Interacts with TMEM177 in a COX20-dependent manner. Interacts with COX20. Interacts with COX16. The cofactor is Cu cation.

Its subcellular location is the mitochondrion inner membrane. The catalysed reaction is 4 Fe(II)-[cytochrome c] + O2 + 8 H(+)(in) = 4 Fe(III)-[cytochrome c] + 2 H2O + 4 H(+)(out). Its function is as follows. Component of the cytochrome c oxidase, the last enzyme in the mitochondrial electron transport chain which drives oxidative phosphorylation. The respiratory chain contains 3 multisubunit complexes succinate dehydrogenase (complex II, CII), ubiquinol-cytochrome c oxidoreductase (cytochrome b-c1 complex, complex III, CIII) and cytochrome c oxidase (complex IV, CIV), that cooperate to transfer electrons derived from NADH and succinate to molecular oxygen, creating an electrochemical gradient over the inner membrane that drives transmembrane transport and the ATP synthase. Cytochrome c oxidase is the component of the respiratory chain that catalyzes the reduction of oxygen to water. Electrons originating from reduced cytochrome c in the intermembrane space (IMS) are transferred via the dinuclear copper A center (CU(A)) of subunit 2 and heme A of subunit 1 to the active site in subunit 1, a binuclear center (BNC) formed by heme A3 and copper B (CU(B)). The BNC reduces molecular oxygen to 2 water molecules using 4 electrons from cytochrome c in the IMS and 4 protons from the mitochondrial matrix. This is Cytochrome c oxidase subunit 2 (MT-CO2) from Halichoerus grypus (Gray seal).